The chain runs to 66 residues: Beta-toxin Cbo2 (66 aa).

Residues 1–66 enclose the LCN-type CS-alpha/beta domain; that stretch reads KEGYIVNYHD…VWPLPKKTCN (66 aa). 4 disulfides stabilise this stretch: cysteine 12/cysteine 65, cysteine 16/cysteine 41, cysteine 25/cysteine 46, and cysteine 29/cysteine 48. Position 66 is an asparagine amide (asparagine 66).

It belongs to the long (4 C-C) scorpion toxin superfamily. Sodium channel inhibitor family. Beta subfamily. As to expression, expressed by the venom gland.

It is found in the secreted. In terms of biological role, beta toxins bind voltage-independently at site-4 of sodium channels and shift the voltage of activation toward more negative potentials thereby affecting sodium channel activation and promoting spontaneous and repetitive firing. A mixture of Cbo2 and Cbo3 is weakly active on the human voltage-gated sodium channels Nav1.4/SCN4A and Nav1.6/SCN8A when tested at 200 nM. In vivo, is toxic to mice when intraperitoneally injected. In Centruroides bonito (Scorpion), this protein is Beta-toxin Cbo2.